The sequence spans 479 residues: Proline--tRNA ligase (479 aa).

The protein belongs to the class-II aminoacyl-tRNA synthetase family. ProS type 3 subfamily. In terms of assembly, homodimer.

The protein resides in the cytoplasm. It catalyses the reaction tRNA(Pro) + L-proline + ATP = L-prolyl-tRNA(Pro) + AMP + diphosphate. In terms of biological role, catalyzes the attachment of proline to tRNA(Pro) in a two-step reaction: proline is first activated by ATP to form Pro-AMP and then transferred to the acceptor end of tRNA(Pro). This Agathobacter rectalis (strain ATCC 33656 / DSM 3377 / JCM 17463 / KCTC 5835 / VPI 0990) (Eubacterium rectale) protein is Proline--tRNA ligase.